The sequence spans 68 residues: Large ribosomal subunit protein uL29 (68 aa).

It belongs to the universal ribosomal protein uL29 family.

In Roseobacter denitrificans (strain ATCC 33942 / OCh 114) (Erythrobacter sp. (strain OCh 114)), this protein is Large ribosomal subunit protein uL29.